Consider the following 9904-residue polypeptide: MNYRDKIQKFSIRKYTVGTFSTVIATLVFLGFNTSQAHAAETNQPASVVKQKQQSNNEQTENRESQVQNSQNSQNSQSLSATHENEQPNISQANLVDQKVAQSSTTNDEQPASQNVNTKKDSATAATTQPDKEEGKHKQNESQSANKNGNDNRAAHLENHEANVVTASDSSDNGNVQHDRNELQAFFDANYHDYRFIDRENADSGTFNYVKGIFEKINTLLGSNDPINNKDLQLAYKELEQAVALIRTMPQRQQTSRRSNRIQTRSVESRAAEPRSVSDYQNANSSYYVENANDGSGYPVGTYINASSKGAPYNLPTTPWNTLKASDSKEIALMTAKQTGDGYQWVIKFNKGHAPHQNMIFWFALPADQVPVGRTDFVTVNSDGTNVQWSHGAGAGANKPLQQMWEYGVNDPDRSHDFKIRNRSGQVIYSWPTVHVYSLEDLSRASDYFSEAGATAATKAFGRQNFEYINGQKPAESPGVPKVYTFIGQGDASYTISFKTQGPTVNKLYYAAGGRALEYNQLFMYSQLYVESTQDHQQRLNGLRQVVNRTYRIGTTKRVEVSQGNVQTKKVLESTNLNIDGFVDDPLSYVKTPSNKVLGFYPTNATTNAFRPGGVQELNEYQLSQLFTDQKLQEAARTRNPIRLMIGFDYPDGYGNSETLVPVNLTVLPEIQHNIKFFKNDDTQNIAEKPFSKQAGHPVFYVYAGNQGNASVNLGGSVTSIQPLRINLTSNENFTDKDWQITGIPRTLHIENSTNRTNNARERNIELVGNLLPGDYFGTIRFGRKEQLFEIRVKPHTPTITTTAEQLRGTALQKVPVNISGIPLDPSALVYLVAPTNQTTNGGSEADQIPSGYTILATGTPDGVHNTITIRPQDYVVFIPPVGKQIRAVVYYNKVVASNMSNAVTILPDDIPPTINNPVGINAKYYRGDEVNFTMGVSDRHSGIKNTTITTLPNGWTSNLTKSDNKNGSLAITGRVSMNQAFNSDITFKVSATDNVNNTTNDSQSKHVSIHVGKISEDAHPIVLGNTEKVVVVNPTAVSNDEKQSIITAFMNKNQNIRGYLASTDPVTVDNNGNVTLHYRDGSSTTLDATNVMTYEPVVKSEYQTANAAKTATVTIAKGQSFNIGDIKQYFTLSNGQAIPSGTFTNITSDRTILTAQEVSQMNAGTQLYHIVASNAYHKDTEDFYISLKIVDVKQPEGDQRVYRTSTYDLTTDEISKVKQAFINANRDVITLAEGNISVTNTPNGANVSTITVNINKGRLTKSFASNLANMNFLRWVNFPQDYTVTWTNAKIANRPTDGGLSWSDDHKSLIYRYDATLGTQITTNDILTMLKATTTVPGLRNNITGNEKAQAEAGGRPNFRTTGYSQSNATTDGQRQFTLNGQVIQVLDIINPSNGYGGQPVTNSNTRANHSNSTVVNVNEPAANGASAFTIDHVVKSNSTHNASDAVYKAQLYLTPYGPKQYVEHLNQNTGNTTDAINIYFVPSDLVNPTISVGNYTNHQVFSGETFTNTITANDNFGVQSVTVPNTSQITGTVDNNHQHVSATAPNVTSATNKTINLLATDTSGNTATTSFNVTVKPLRDKYRVGTSSTAANPVRIANISNNATVSQADQTAIINSLTFTETVPNRSYARASANEITSKTVSNVSRTGNNANVTVTATYQDGTTSTVTVPVKHVIPEIVAHSHYTVQGQDFPAGNGSSASDYFKLSNGSAIPDATITWVSGQAPNKDNTRIGEDITVTAHILIDGETTPITKTATYKVVSTVPKHVFETNRGAVFPGVSDVYDAKQYVKPVNDSWTQNAQRMNFQFTNSYGPSKDVVGISTRDIRVTYDNHQTQIIKILAKVKPDPPRIDGNSVTYKAGLTNQQIKINNVLSSSSIKLFKADNTPLTITNTTYGSGNTAVVTVSDALPNGVIKARSSITMNNVTYTTQDEHGRAIDVTRNESVDSNDSATVTVTPQLQATTEGAVFIKGGDGFDFGHVERFIQNPPHGATVAWHDSPDTWKNTVGNTHKTAVVTLPNGQGTRNVEVPVKVYPVANAKAPSRDVKGQNLTNGTDAMNYITFDPNTNTNGITAAWANRQQPNNQQAGVQHLNVDVTYPGISAAKRVPVTVNVYQFEFPQTTYTTTVGGTLASGTQASGYAHMQNATGLPTDGFTYKWNRDTTGTNDANWSAMNKPNVAKVVNAKYDVIYNGHTFATSLPAKFVVKDVQPAKPTVTETAAGAITIAPGANQTVNTHAGNVTTYADKLVIKRNGNVVTTFTRRNNTSPWVKEASAATVAGIAGTNNGITVAAGTFNPADTIQVVATQGSGETVSDEQRSDDFTVVAPQPNQATTKIWQNGHIDITPNNPSGHLINPTQAMDIAYTEKVGNGAEHSKTINVVRGQNNQWTIANKPDYVTLDAQTGKVTFNANTIKPNSSITITPKAGTGHSVSSNPSTLTAPAAHTVNTTEIVKDYGSNVTAAEINNAVQVANKRTATIKNGTAMPTNLAGGSTTTIPVTVTYNDGSTEEVQESIFTKADKRELITAKNHLDDPVSTEGKKPGTITQYNNAIHNAQQQINTAKTEAQQVINNDRATPQQVSDALTKVRAAQTKIDQAKALLQNKEDNSQLVTSKNNLQSSVNQVPSTAGMTQQSIDNYNAKKREAETEITAAQRVIDNGDATPQQISEEKHRVDNALTALNQAKQNLTADTHTLEQAVQQLNRTGTTTGKKPASITAYNNSMHALQAELTSAKNSANAIIQKPIRSVQEVQTALTNVNRVNERLTQAINQLVPLADNSALRTAKTKLDEEINKSVTTDGMTQSSIQAYENAKRAGQTESTNAQNVINNGDATDQQIAEEKTKVEEKYNSLKQAIAGLTPDLAPLQTAKTQLQNDIDQPTSTTGMTSTSIAAFNEKLSAARTKIQEIDRVLASHPDVATIRQNVTAANAAKTALDQARNGLTVDKAPLENAKNQLQHSIDTQTSTTGMTQDSINAYNAKLTAARNKIQQINQVLAGSPTVEQINTNTSAANQAKSDLDHARQALTPDKAPLQTAKTQLEQSINQPTDTTGMTTASLNAYNQKLQAARQKLTEINQVLNGNPTVQNINDKVTEANQAKDQLNTARQGLTLDRQPALTTLHGASNLNQAQQNNFTQQINAAQNHAALETIKSNITALNTAMTKLKDSVADNNTIKSGQNYTDATPANKQAYDNAVNAAKGVIGETTNPTMDVNTVNQKAASVKSTKDALDGQQNLQRAKTEATNAITHASDLNQAQKNALTQQVNSAQNVHAVNDIKQTTQSLNTAMTGLKRGVANHNQVVQSDNYVNADTNKKNDYNNAYNHANDIINGNAQHPVITPSDVNNALSNVTSKEHALNGEAKLNAAKQEANTALGQLNNLNNAQRQNLQSQINSAHQIETVNTIKQNATNLNSAMGNLRQAVADKDQVKRTEDYADADTAKQNAYNSAVSSAETIINQTTNPTMSVDDVNRATSAVTSNKNALNGDEKLAQSKTDAARAIDALPHLNNAQKADVKSKINAASNIAGVNTVKQQGTDLNTAMGNLQGAINDEQTTLNSQNYQDATPSKKTAYTNAVQAAKDILNKSNGQNKTKDQVTEAMNQLNSAKNNLDGTRLLDQAKQTAKQQLNNMTHLTTAQKTNLTNQINSGTTVAGVHTVQSNANTLDQAMNTLRQSIANKDATKASEDYVDANNDKQTAYNNAVAAAETIINANSNPEMNPSTITQKAEQVNSSKTALNGDENLATAKQNAKTYLNTLTSITDAQKNNLISQISSATRVSGVDTVKQNAQHLDQAMASLQSGINNESQVKSSEKYRDADTNKQQEYDNAITAAKAILNKQHGPNTAQNAVEAALQRVNTAKDALNGDAKLIAAQNAAKQHLGTLTHITTAQRNDLTNQISQATNLAGVESVKQNANSLDGAMGNLQTAINDKSGTLASQNFLDADEQKRNAYNQAVSAAETILNKQTGPNTAKTAVEQALNNVNNAKHALNGTQNLNNAKQAAITAINGASDLNQHQKDALKAQANGAQRVSNAQDVQRNATELNTAMGTLKHAIADKTNTLASSKYVNADSTKQNAYTTKVTNAEHIISGTPTVVTTPSEVTAAANQVNSAKQELNGDERLRVAKQNANTAIDALTQLNTPQKAKLKEQVGQANTLDDAMNSLQGAINDKDATLRNQNYLDADESKRNAYTQAVTAAEGILNKQTGGNTSKADVDNALNAVTRAKAALNGAENLRNAKTSATNTINGLPNLTQLQKDNLKHQVEQAQNVAGVNGVKDKGNTLNTAMGALRTSIQNDNTTKTSQNYLDASDSNKNNYNTAVNNANGVINATNNPNMDANAINGMANQVNTTKAALNGVQNLAQAKTNATNTINNAHDLNQKQKDALKTQVNNAQRVSDANNVQHTATELNGAMTALKAAIADKERTKASGNYVNADQEKRQAYDSKVTNAENIINGTPNATLTVNDVNSATSQVNAAKTALNGDNNLRVAKENANNTIDGLAQLNNAQKAKLKEQVQSATTLEGVQTVKNSSQTLNTAMKGLRDSIANEATIKAGQNYTDASPTNRNEYDSAVTAAKAIINQTSNPTMEPNTITQATSQVTTKEHALNGAQNLAQAKTTAKNNLNNLTSINNAQKDALTRSIDGATTVAGVNQETAKATELNNAMHSLQNGINDETQTKQTQKYLDAEPNKKSAYDQAVNAAKAILTKASGQNVDKAAVEQALQNVNSTKTALNGDAKLNEAKAAAKQTLGTLTHINNAQRNALDNEITQATNVEGVNTVKAKAQQLDGAMGQLETSIRDKDTTLQSQNYQDADDAKRTAYSQAVNAAATILNKTAGGNTPKADVERAMQAVAQANTALNGIQNLERAKQAANTAITNASDLNTKQKEALKAQVTSAGRVSAANGVEHTATEINTAMTALKRAIADKADTKTSGNYVNADANKRQAYDEKVTAAESIVNGTPTPTLTPSDVTNAATQVTNAKTQLNGNHNLEVAKQNANTAIDGLTSLNGPQKAKLKEQVGQATTLPNVQTVRDNAQTLNTAMKGLRDSIANEATIKAGQNYTDASPNNRSEYDSAVTAAKAIIGQTTSPSMNAQEINQAKDQVTAKQQALNGQENLRTAQTNAKQHLNGLSDLTNAQKEAAKRQIEGATHVNEVTQAQNNADALNTAMTNLKNGIQDQNTIKQGVNFTDADEAKRNAYTNAVTQAEQILNKAQGPNTAKDNVESALQNVQRAKNELNGNQNVANAKTTAKNALNNLTSINNAQKEALKSQIEGATTVAGVNQVSTTASELNTAMSNLQRGINDEAATKAAQKYTDADRDKQTAYNDAVTAAKTLLDKTAGTNENKAAVEQALQRVNTAKTALNGDARLNEAKNTAKQQVATMSHLTDAQKANLTSQIESGTTVAGVQGIQANAGTLDQAMNQLRQSIASKDATKSSEDYQDANADLQNAYNDAVTNAEGIISATNNPEMNPDTINQKASQVNSAKSALNGDEKLAAAKQTAKSDIGRLTDLNNAQRTAANAEVDQAPNLAAVTAAKNKATSLNTAMGNLKHALAEKDNTKRSVNYTDADQPKQQAYDTAVTQAEAITNANGSNANETTVQAALNQLNQAKNDLNGDNKVAQAKESAKRALASYSNLNNAQSTAATSQIDNATTVAGVTAAQNTANELNTAMGQLQNGINDQNTVKQQVNFTDADQGKKDAYTNAVTNAQGILDKANGQNMTKAQVEAALNQVTTAKNALNGDANVRQAKSDAKANLGTLTHLNNAQKQDLTSQIEGATTVNGVNSVKTKAQDLDGAMQRLESAIANKDQTKASENYIDADPTKKTAFDNAITQAESYLNKDHGTNKDKQAVEQAIQSVTSTENALNGDANLQRAKTEATQAIDNLTHLNTPQKTALKQQVNAAQRVSGVTDLKNSATSLDNAMDQLKQGIADHDTIVAGGNYTNASPDKQGAYTDAYNAAKNIVNGSPNVITNAADVTAATQRVNNAETSLNGDSNLATAKQQAKDALRQMTHLSDAQKQSITGQIDSATQVTGVQSVKDNATNLDNAMNQLRNSIANKDEVKASQPYVDADTDKQNAYNTAVTSAENIINATSQPTLDPSAVTQAANQVNTNKTALNGAQNLANKKQETTANINQLSHLNNAQKQDLNTQVTNAPNISTVNQVKTKAEQLDQAMERLINGIQDKDQVKQSVNFTDADPEKQTAYNNAVTAAENIINQANGTNANQSQVEAALSTVTTTKQALNGDRKVTDAKNNANQTLSTLDNLNNAQKGAVTGNINQAHTVAEVTQAIQTAQELNTAMGNLKNSLNDKDTTLGSQNFADADPEKKNAYNEAVRNAENILNKSTGTNVPKDQVEAAMNQVNTTKAALNGTQNLEKAKQHANTAIDGLSHLTNAQKEALKQLVQQSTTVAEAQGNEQKANNVDAAMDKLRQSIADNATTKQNQNYTDASPNKKDAYNNAVTTAQGIIDQTTSPTLDPTVINQAAGQVSTTKNALNSNENLEAAKQQATQSLGSLDNLNNAQKQAVTDQINGAHTVDEANQIKQNAQNLNTAMGNLKQAIADKDATKATVNFTDADQAKQQAYNTAVTNAENIISKANGGNATQTEVEQAIQQVNAAKQALNGNANVQHAKDEATALINSSNDLNQAQKNALKQQVQNATTVAGVNNVKQTAQELNNAMTQLKQGIADKEQTKADGNFVNADPDKQNAYNQAVAKAEALISGTPDVVVTPSEITAALNKVTQAKNDLNGNTNLATAKQNVQHAIDQLPNLNQAQRDEYNKQITQATHVPNVNAIQQAATTLNDAMTQLKQGIANKAQIKGSENYHDADTDKQTAYDNAVTKAEELLKQTTNPTMDPNTIQQALTKVNDTNQALNGNQKLADAKQAAKTNLGTLDHLNDAQKQALTTQVEQAPDIATVNNVKQNAQNLNNAMTNLNNALQDKTETLNSINFTDADQAKKDAYTNAVSHAEGILSKANGSNASQTEVEQAMQRVNEAKQALNGNDNVQRAKDAAKQVITNANDLNQAQKDALKQQVDAAQTVANVNTIKQTAQDLNQAMTQLKQGIADKDQTKANGNFVNADTDKQNAYNNAVAHAEQIISGTPNANVDPQQVAQALQQVNQAKGDLNGNHNLQVAKDNANTAIDQLPNLNQPQKTALKDQVSHAELVTGVNAIKQNADALNNAMGTLKQQIQANSQVPQSVDFTQADQDKQQAYNNAANQAQQIANGTPTPVLAPDTVTQAVTTMNQAKDALNGDEKLAQAKQDALANLDTLRDLNQPQRDALRNQINQAQALATVEQTKQNAQNVNTAMGNLKQGIANKDTVKASENYHDADVDKQTAYTNAVSQAEGIINQTTNPTLNPDDITRALTQVTDAKNSLNGEAKLATEKQNAKDAVNAMTHLNDAQKQALKGQIDQSPEIATVNQVKQTATSLDHAMDQLSQAINDKAQTLADGNYLNADPDKQNAYKQAVAKAEALLNKQSGTNEVQAQVESITNEVNAAKQALNGNDNLANAKQQAKQQLANLTHLNDAQKQSFESQITQAPLVTDVTTINQKAQTLDHAMELLRNSVADNQTTLASEDYHDATAQRQNDYNQAVTAANNIINQTTSPTMNPDDVNGATTQVNNTKVALDGDENLAAAKQQANNRLDQLDHLNNAQKQQLQSQITQSSDIAAVNGHKQTAETLNTAMGNLINAIADHQAVEQRGNFINADTDKQTAYNTAVNEAAAMINKQTGQNANQTEVEQAITKVQTTLQALNGDHNLQVAKTNATQAIDALTSLNDPQKTALKDQVTAATLVTAVHQIEQNANTLNQAMHGLRQSIQDNAATKANSKYINEDQPEKQNYDQAVQAANNIINEQTATLDNNAINQAAATVNTTKAALHGDVKLQNDKDHAKQTVSQLAHLNNAQKHMEDTLIDSETTRTAVKQDLTEAQALDQLMDALQQSIADKDATRASSAYVNAEPNKKQAYDEAVQNAESIIAGLNNPTINKGNVSSATQAVTSSKNALDGVERLAQDKQTAGNSLNHLDQLTPAQQQALENQINNATTRDKVAEIIAQAQALNEAIKALKESIKDQPQTEASSKFINEDQAQKDAYTQAVQHAKDLINKTTDPTLAKSIIDQATQAVTDAKNNLHGDQKLAQDKQRATETLNNLSNLNTPQRQALENQINNAATRVEVAQKLTEAQALNQAMEALRNSIQDQQQTEAGSKFINEDKPQKDAYQAAVQNAKDLINQTNNPTLDKAQVEQLTQAVNQAKDNLHGDQKLADDKQHAVTDLNQLNGLNNPQRQALESQINNAATRDEVAQKLAEAKALDQAMQALRNSIQDQQQTESGSKFINEDKPQKDAYQAAVQNAKDLINQTGNPTLDKAQVEQLTQAVTTAKDNLHGDQKLARDQQQAVTTVNALPNINHAQQQALTDAINAAPTRTEVAQHVQTATELDHAMETLKNKVDQVNTDKAQPNYTEASTDKKEAVDQALQAAESITDPTNGSNANKDAVEQALTKLQEKVNELNGDERVAEAKTQAKQNIDQLTHLNADQIATAKQNIDQATQLQPIAELVDQATQLNQSMDQLQQAVNDHTNVEQTVDYTQADSDKQKAYKQAIADAENVLKQNANKQQVDQALQNILNAKQALNGDERVALAKTNGKHDIDQLNALNNAQQDGFKGRIDQSNDLNQIQQIVDEAKALNRAMDQLSEEITGNEGRTKGSTNYVNADTQVKQVYDEAVDKAKQALDKSTGQNLTAEQVIKLNDAVTAAKQALNGEERLNNRKSEALQRLDQLTHLNNAQRQLAIQQINNAETLNKASRAINRATKLDNAMGAVQQYIDEQHLGVISSTNYINADDNLKANYDNAIANAAHELDKVQGNAIAKAEAEQLKQNIIDAQNALNGDQNLANAKDKANAFVNSLNGLNQQQQDLAHKAINNADTVSDVTDIVNNQIDLNDAMETLKHLVDNEIPNAEQTVNYQNADDNAKTNFDDAKRLANALLNSDNTNVNDINGAIQAVNDAIHNLNGDQRLQDAKDKAIQSINQALANKLKEIEASNATDQDKLIAKNKAEELANSIINNINKATSNQDVSQVQTAGNHAIEQVHANEIPKAKIDANKDVDKQVQALIDEIDRNPNLTDKEKQALKDRINQILQQGHNDINNALTKEEIEQAKAQLAQALQEIKDLVKAKENAKQDVDKQVQALIDEIDQNPNLTDKEKQALKDRINQILQQGHNDINNAMTKEEIEQAKAQLAQALQDIKDLVKAKEDAKNAIKALANAKRDQINSNPDLTPEQKAKALKEIDEAEKRALQNVENAQTIDQLNRGLNLGLDDIRNTHVWEVDEQPAVNEIFEATPEQILVNGELIVHRDDIITEQDILAHINLIDQLSAEVIDTPSTATISDSLTAKVEVTLLDGSKVIVNVPVKVVEKELSVVKQQAIESIENAAQQKINEINNSVTLTLEQKEAAIAEVNKLKQQAIDHINNAPDVHSVEEIQQQEQAHIEQFNPEQFTIEQAKSNAIKSIEDAIQHMIDEIKARTDLTDKEKQEAIAKLNQLKEQAIQAIQRAQSIDEITEQLEQFKAQMKAANPTAKELAKRKQEAISRIKDFSNEKMNSIRNSEIGTADEKQAAMNQINEIVLETIRDINNAHTLQQVEAALNNGIARISAVQIVISDRAKQSSSTGNESNSHLTIGYGTANHPFNSSTIGHKKKIDEDDDIDPLHMRHFSNNFGNVIKNAIGVVGISGLLASFWFFIAKRRRKEDEEEELEIRDNNKDSIKETLDDTKHLPLLFAKRRRKEDEEDVTVEEKDSLNNGESLDKVKHTPFFLPKRRRKEDEEDVEVTNENTDEKVLKDNEHSPLLFAKRRKDKEEDVETTTSIESKDEDVPLLLAKKKNQKDNQSKDKKSASKNTSKKVAAKKKKKKSKKNKK.

A signal peptide spans 1–39 (MNYRDKIQKFSIRKYTVGTFSTVIATLVFLGFNTSQAHA). Residues 41 to 59 (ETNQPASVVKQKQQSNNEQ) show a composition bias toward polar residues. Disordered regions lie at residues 41 to 153 (ETNQ…NDNR) and 250 to 277 (PQRQQTSRRSNRIQTRSVESRAAEPRSV). A compositionally biased stretch (low complexity) spans 65–78 (SQVQNSQNSQNSQS). Residues 79–117 (LSATHENEQPNISQANLVDQKVAQSSTTNDEQPASQNVN) show a composition bias toward polar residues. The span at 130 to 140 (PDKEEGKHKQN) shows a compositional bias: basic and acidic residues. Composition is skewed to polar residues over residues 141-151 (ESQSANKNGND) and 250-266 (PQRQQTSRRSNRIQTRS). FIVAR domains are found at residues 2524-2580 (AKNH…VSDA), 2610-2666 (SKNN…ISEE), 2687-2750 (DTHT…VQTA), 2780-2836 (AKTK…IAEE), 2864-2919 (AKTQ…IRQN), 2947-3002 (AKNQ…INTN), 3030-3085 (AKTQ…INDK), 3154-3212 (AMTK…VNQK), 3280-3339 (AMTG…VNNA), 3407-3465 (AMGN…VNRA), 3533-3591 (AMGN…VTEA), 3659-3717 (AMNT…ITQK), 3785-3843 (AMAS…VEAA), 3911-3969 (AMGN…VEQA), 4037-4095 (AMGT…VTAA), 4160-4208 (DKDA…VDNA), 4276-4334 (AMGA…INGM), 4402-4460 (AMTA…VNSA), 4528-4586 (AMKG…ITQA), 4654-4712 (AMHS…VEQA), 4780-4838 (AMGQ…VERA), 4906-4964 (AMTA…VTNA), 5032-5090 (AMKG…INQA), 5158-5216 (AMTN…VESA), 5284-5342 (AMSN…VEQA), 5410-5468 (AMNQ…INQK), 5536-5593 (AMGN…VQAA), 5661-5719 (AMGQ…VEAA), 5787-5845 (AMQR…VEQA), 5913-5971 (AMDQ…VTAA), 6039-6097 (AMNQ…VTQA), 6175-6223 (DKDQ…VEAA), 6291-6349 (AMGN…VEAA), 6417-6475 (AMDK…INQA), 6543-6601 (AMGN…VEQA), 6669-6727 (AMTQ…ITAA), 6795-6853 (AMTQ…IQQA), 6921-6979 (AMTN…VEQA), 7047-7105 (AMTQ…VAQA), 7173-7231 (AMGT…VTQA), 7299-7357 (AMGN…ITRA), 7425-7486 (AMDQ…ITNE), 7551-7609 (AMEL…VNGA), 7677-7735 (AMGN…VEQA), 7803-7860 (AMHG…INQA), 7928-7986 (LMDA…VSSA), 8054-8112 (AIKA…IDQA), 8180-8238 (AMEA…VEQL), 8306-8364 (AMQA…VEQL), 8432-8490 (AMET…VEQA), 8558-8612 (SMDQ…VDQA), 8680-8739 (AMDQ…VIKL), and 8934-8990 (AMET…INGA). Residues 9710–9730 (IKNAIGVVGISGLLASFWFFI) traverse the membrane as a helical segment. The interval 9807 to 9904 (RRKEDEEDVE…KKKKSKKNKK (98 aa)) is disordered. Composition is skewed to basic and acidic residues over residues 9822 to 9832 (TDEKVLKDNEH) and 9871 to 9881 (QKDNQSKDKKS). Positions 9886-9904 (TSKKVAAKKKKKKSKKNKK) are enriched in basic residues.

The protein localises to the cell membrane. The polypeptide is Extracellular matrix-binding protein ebh (ebh) (Staphylococcus aureus (strain MW2)).